Here is a 443-residue protein sequence, read N- to C-terminus: Ribosomal protein uS12 methylthiotransferase RimO (443 aa).

The region spanning 5–116 (PTIAINHLGC…IVDIIRRTEQ (112 aa)) is the MTTase N-terminal domain. [4Fe-4S] cluster is bound by residues Cys-14, Cys-50, Cys-79, Cys-154, Cys-158, and Cys-161. Residues 140–369 (TTNEAIAYLR…MALQQPISAQ (230 aa)) enclose the Radical SAM core domain. In terms of domain architecture, TRAM spans 372–438 (AACLGQTLDV…DYDLYGMTAE (67 aa)).

This sequence belongs to the methylthiotransferase family. RimO subfamily. Requires [4Fe-4S] cluster as cofactor.

Its subcellular location is the cytoplasm. It catalyses the reaction L-aspartate(89)-[ribosomal protein uS12]-hydrogen + (sulfur carrier)-SH + AH2 + 2 S-adenosyl-L-methionine = 3-methylsulfanyl-L-aspartate(89)-[ribosomal protein uS12]-hydrogen + (sulfur carrier)-H + 5'-deoxyadenosine + L-methionine + A + S-adenosyl-L-homocysteine + 2 H(+). In terms of biological role, catalyzes the methylthiolation of an aspartic acid residue of ribosomal protein uS12. This chain is Ribosomal protein uS12 methylthiotransferase RimO, found in Synechocystis sp. (strain ATCC 27184 / PCC 6803 / Kazusa).